We begin with the raw amino-acid sequence, 224 residues long: Metalloproteinase inhibitor 4 (224 aa).

A signal peptide spans 1 to 29 (MPGSPRPAPSWVLLLRLLALLRPPGLGEA). Cysteine 30 serves as a coordination point for Zn(2+). Involved in metalloproteinase-binding stretches follow at residues 30–33 (CSCA) and 99–100 (SS). Cystine bridges form between cysteine 30–cysteine 102, cysteine 32–cysteine 131, cysteine 42–cysteine 156, cysteine 158–cysteine 205, cysteine 163–cysteine 168, and cysteine 176–cysteine 197. An NTR domain is found at 30-156 (CSCAPAHPQQ…SLNHHYHLNC (127 aa)).

Belongs to the protease inhibitor I35 (TIMP) family. As to expression, abundant in heart and present at low levels in many other tissues.

Its subcellular location is the secreted. Complexes with metalloproteinases (such as collagenases) and irreversibly inactivates them by binding to their catalytic zinc cofactor. Known to act on MMP-1, MMP-2, MMP-3, MMP-7 and MMP-9. This is Metalloproteinase inhibitor 4 (TIMP4) from Homo sapiens (Human).